A 115-amino-acid polypeptide reads, in one-letter code: Transcription and mRNA export factor ENY2 (115 aa).

Belongs to the ENY2 family. As to quaternary structure, component of a deubiquitination module (DUB module) formed by ENY2, SGF11, and UBP22 in Arabidopsis. Interacts directly with SGF11, but not with UBP22. Interacts with MOS4. As to expression, expressed in roots, cotyledons, leaves and upper part of sepals.

It localises to the nucleus. The protein localises to the nucleoplasm. Component of a deubiquitination module (DUB module) that specifically deubiquinates monoubiquinated histone H2B (H2Bub). Does not seem to be a component of the TREX-2 complex. Seems to act independently of the SAGA multiprotein complex. The DUB module is responsible for the major H2Bub deubiquitinase activity in Arabidopsis. This Arabidopsis thaliana (Mouse-ear cress) protein is Transcription and mRNA export factor ENY2.